The primary structure comprises 390 residues: LIM/homeobox protein Lhx4 (390 aa).

2 consecutive LIM zinc-binding domains span residues 28-87 and 88-150; these read PQCA…RFGT and KCTA…AKQN. Positions 157-216 form a DNA-binding region, homeobox; that stretch reads AKRPRTTITAKQLETLKNAYKNSPKPARHVREQLSSETGLDMRVVQVWFQNRRAKEKRLK. Residues 161–181 form an interaction with DNA region; the sequence is RTTITAKQLETLKNAYKNSPK. The segment at 199–211 is interaction with 5-mCpG DNA; that stretch reads RVVQVWFQNRRAK. Disordered regions lie at residues 230 to 253 and 356 to 390; these read SVKRSRGSSKQEKESSAEDCGVSD and AGGPTSDISTGSSVGYPDFPTSPGSWLDEMDHPPF.

The protein resides in the nucleus. May play a critical role in the development of respiratory control mechanisms and in the normal growth and maturation of the lung. Binds preferentially to methylated DNA. In Homo sapiens (Human), this protein is LIM/homeobox protein Lhx4 (LHX4).